Reading from the N-terminus, the 519-residue chain is MFLLPLPAAGRVVVRRLAVRRFGSRSLSTADMTKGLVLGIYSKEKEDDVPQFTSAGENFDKLLAGKLRETLNISGPPLKAGKTRTFYGLHQDFPSVVLVGLGKKAAGIDEQENWHEGKENIRAAVAAGCRQIQDLELSSVEVDPCGDAQAAAEGAVLGLYEYDDLKQKKKMAVSAKLYGSGDQEAWQKGVLFASGQNLARQLMETPANEMTPTRFAEIIEKNLKSASSKTEVHIRPKSWIEEQAMGSFLSVAKGSDEPPVFLEIHYKGSPNANEPPLVFVGKGITFDSGGISIKASANMDLMRADMGGAATICSAIVSAAKLNLPINIIGLAPLCENMPSGKANKPGDVVRAKNGKTIQVDNTDAEGRLILADALCYAHTFNPKVILNAATLTGAMDVALGSGATGVFTNSSWLWNKLFEASIETGDRVWRMPLFEHYTRQVVDCQLADVNNIGKYRSAGACTAAAFLKEFVTHPKWAHLDIAGVMTNKDEVPYLRKGMTGRPTRTLIEFLLRFSQDNA.

S42 carries the phosphoserine modification. K45 is modified (N6-succinyllysine). Position 54 is a phosphoserine (S54). An N6-succinyllysine mark is found at K61 and K103. Phosphoserine is present on residues S180 and S194. Positions 202, 203, and 205 each coordinate Zn(2+). K221 is subject to N6-acetyllysine; alternate. At K221 the chain carries N6-succinyllysine; alternate. S238 bears the Phosphoserine mark. Residues K282 and D287 each contribute to the Zn(2+) site. 4 residues coordinate substrate: K282, D287, S292, and K294. D287 is a binding site for Mg(2+). Residue K294 is part of the active site. Zn(2+) is bound by residues R303, D305, D364, and E366. Residues D305 and D364 each coordinate substrate. Residues D364 and E366 each contribute to the Mg(2+) site. Residue R368 is part of the active site. At K455 the chain carries N6-acetyllysine; alternate. K455 carries the N6-succinyllysine; alternate modification. The residue at position 476 (K476) is an N6-succinyllysine. Residue K489 is modified to N6-acetyllysine; alternate. K489 is subject to N6-succinyllysine; alternate.

It belongs to the peptidase M17 family. As to quaternary structure, homohexamer. The cofactor is Zn(2+). Mn(2+) is required as a cofactor.

The protein resides in the cytoplasm. The catalysed reaction is Release of an N-terminal amino acid, Xaa-|-Yaa-, in which Xaa is preferably Leu, but may be other amino acids including Pro although not Arg or Lys, and Yaa may be Pro. Amino acid amides and methyl esters are also readily hydrolyzed, but rates on arylamides are exceedingly low.. It carries out the reaction an S-substituted L-cysteinylglycine + H2O = an S-substituted L-cysteine + glycine. The enzyme catalyses L-cysteinylglycine + H2O = L-cysteine + glycine. It catalyses the reaction S-benzyl-L-cysteinylglycine + H2O = S-benzyl-L-cysteine + glycine. The catalysed reaction is Release of N-terminal proline from a peptide.. Its function is as follows. Cytosolic metallopeptidase that catalyzes the removal of unsubstituted N-terminal hydrophobic amino acids from various peptides. The presence of Zn(2+) ions is essential for the peptidase activity, and the association with other cofactors can modulate the substrate spectificity of the enzyme. For instance, in the presence of Mn(2+), it displays a specific Cys-Gly hydrolyzing activity of Cys-Gly-S-conjugates. Involved in the metabolism of glutathione and in the degradation of glutathione S-conjugates, which may play a role in the control of the cell redox status. In Homo sapiens (Human), this protein is Cytosol aminopeptidase.